The chain runs to 420 residues: LanC-like protein 3 (420 aa).

This sequence belongs to the LanC-like protein family.

The polypeptide is LanC-like protein 3 (LANCL3) (Homo sapiens (Human)).